Consider the following 168-residue polypeptide: MPRSRINGNFIDKTSSIVANILLRIIPTTSGEKEAFTYYRDGMSAQSEGNYAEALQNYYEATRLEIDPYDRSYILYNIGLIHTSNGEHTKALEYYFRAIERNPFLPQAFNNMAVICHYRGEQAIRQGDSEIAEAWSDQAAEYWKQAIALTPGNYIEAHNWLKIARRFE.

TPR repeat units follow at residues 35–68 (AFTY…EIDP), 72–105 (SYIL…NPFL), and 120–153 (GEQA…TPGN).

This sequence belongs to the Ycf3 family.

Its subcellular location is the plastid. The protein resides in the chloroplast thylakoid membrane. Functionally, essential for the assembly of the photosystem I (PSI) complex. May act as a chaperone-like factor to guide the assembly of the PSI subunits. This is Photosystem I assembly protein Ycf3 from Calycanthus floridus var. glaucus (Eastern sweetshrub).